The chain runs to 2514 residues: Nuclear receptor corepressor 2 (2514 aa).

The segment covering 1 to 13 (MSGSTQPVAQTWR) has biased composition (polar residues). The disordered stretch occupies residues 1-24 (MSGSTQPVAQTWRATEPRYPPHSL). Residue Arg-18 is modified to Asymmetric dimethylarginine. A phosphoserine mark is found at Ser-54, Ser-67, Ser-149, and Ser-152. 2 disordered regions span residues 120–162 (PSPL…ELEL) and 190–220 (ISKL…PPIE). Position 156 is a phosphothreonine (Thr-156). The stretch at 174–215 (QNMDRVDREITMVEQQISKLKKKQQQLEEEAAKPPEPEKPVS) forms a coiled coil. Positions 203–212 (EAAKPPEPEK) are enriched in basic and acidic residues. Phosphoserine is present on Ser-215. The interval 254 to 312 (LPLYNQPSDTRQYHENIKINQAMRKKLILYFKRRNHARKQWEQKFCQRYDQLMEAWEKK) is interaction with SIN3A/B. The segment at 389–480 (MRQLAVIPPM…YLTKKNENYK (92 aa)) is deacetylase activation domain (DAD). The 52-residue stretch at 427 to 478 (QVMNMWSEQEKETFREKFMQHPKNFGLIASFLERKTVAECVLYYYLTKKNEN) folds into the SANT 1 domain. 3 residues coordinate 1D-myo-inositol 1,4,5,6-tetrakisphosphate: Lys-449, Tyr-470, and Tyr-471. Disordered regions lie at residues 487–622 (YRRR…EMET), 674–1081 (EKER…APPG), and 1165–1186 (SGVK…SLGV). Ser-493 bears the Phosphoserine mark. Over residues 494–510 (QQQQQQQQQQQQQQQQQ) the composition is skewed to low complexity. Basic and acidic residues predominate over residues 516–552 (SQEEKDEKEKEKEAEKEEEKPEVENDKEDLLKEKTDD). Residues 522–561 (EKEKEKEAEKEEEKPEVENDKEDLLKEKTDDTSGEDNDEK) adopt a coiled-coil conformation. Thr-553 bears the Phosphothreonine mark. Ser-554 is modified (phosphoserine). Composition is skewed to polar residues over residues 597–613 (TPQQ…NESS) and 740–753 (ATVN…SIPS). The SANT 2 domain occupies 610 to 661 (NESSRWTEEEMETAKKGLLEHGRNWSAIARMVGSKTVSQCKNFYFNYKKRQN). Phosphoserine occurs at positions 750 and 753. 2 stretches are compositionally biased toward pro residues: residues 777 to 796 (GPPP…PTEP) and 806 to 822 (PTPP…PPVV). Over residues 856-866 (GKAEEPVKSEC) the composition is skewed to basic and acidic residues. Lys-878 carries the post-translational modification N6-acetyllysine. Polar residues predominate over residues 902–921 (RATTAKSSGAPQDSDSSATC). Low complexity predominate over residues 937-948 (LLSPRPSLLTPT). Ser-939 carries the post-translational modification Phosphoserine. Thr-946 carries the post-translational modification Phosphothreonine. Residue Ser-956 is modified to Phosphoserine. At Lys-959 the chain carries N6-acetyllysine. A compositionally biased stretch (basic and acidic residues) spans 980–990 (KVHEPPREDAA). The segment covering 993-1004 (KPAPPAPPPPQN) has biased composition (pro residues). The span at 1005–1014 (LQPESDAPQQ) shows a compositional bias: polar residues. A Glycyl lysine isopeptide (Lys-Gly) (interchain with G-Cter in SUMO2) cross-link involves residue Lys-1168. Phosphoserine is present on Ser-1173. Lys-1210 and Lys-1240 each carry N6-acetyllysine. Ser-1251 bears the Phosphoserine mark. Positions 1287-1307 (TQCSKEDGRSSSGPPHETAAP) are disordered. Ser-1323 is subject to Phosphoserine. Thr-1383 is modified (phosphothreonine). Disordered stretches follow at residues 1440 to 1482 (PLAP…SPGR) and 1506 to 1609 (ESLK…HPIS). Ser-1479 is subject to Phosphoserine. Residues 1513–1526 (GTASSSGGSIARGA) show a composition bias toward low complexity. Phosphoserine occurs at positions 1539, 1595, and 1619. Arg-1653 is modified (asymmetric dimethylarginine). Disordered regions lie at residues 1763 to 1867 (TAPQ…TQDA) and 1937 to 2124 (KEAP…PGVK). Residues 1766-1782 (QPFSSRHSSSPLSPGGP) show a composition bias toward low complexity. A phosphoserine mark is found at Ser-1775 and Ser-1778. The span at 1794–1813 (SERERDRDRERDRDREREKS) shows a compositional bias: basic and acidic residues. Ser-1861 carries the post-translational modification Phosphoserine. The segment covering 1938–1952 (EAPRVARPERPRADT) has biased composition (basic and acidic residues). An N6-acetyllysine modification is found at Lys-1959. Ser-2005 is subject to Phosphoserine. Lys-2026 is subject to N6-acetyllysine. Residues 2043 to 2060 (SSYSPEGVEPVSPVSSPS) show a composition bias toward low complexity. Phosphoserine occurs at positions 2046, 2054, 2057, 2058, and 2060. Phosphothreonine is present on Thr-2062. A compositionally biased stretch (basic and acidic residues) spans 2062 to 2085 (THDKGLPKHLEELDKSHLEGELRP). Phosphoserine is present on Ser-2077. The segment covering 2106–2117 (LPESQPSSSPLL) has biased composition (low complexity). Positions 2128 to 2131 (RVVT) are required for interaction with RARA in the absence of its ligand. Residues 2136 to 2140 (ISEVI) carry the CORNR box of ID1 motif. 2 disordered regions span residues 2174–2235 (RRPP…GHSR) and 2248–2269 (QTEP…PAFF). A phosphoserine mark is found at Ser-2203, Ser-2223, and Ser-2258. The CORNR box of ID2 motif lies at 2339–2343 (LEAII). The segment at 2384–2500 (DGRSDHTLTS…PHHAWDEEPK (117 aa)) is disordered. Ser-2413 is modified (phosphoserine). A compositionally biased stretch (low complexity) spans 2482 to 2492 (PAGSGPLAGPH).

This sequence belongs to the N-CoR nuclear receptor corepressors family. Forms a large corepressor complex that contains SIN3A/B and histone deacetylases HDAC1 and HDAC2. This complex associates with the thyroid (TR) and the retinoid acid receptors (RAR) in the absence of ligand, and may stabilize their interaction with TFIIB. Interacts directly with RARA in the absence of ligand; the interaction represses RARA activity. Interacts (isoform SMRT) with HDAC10. Interacts with MINT. Component of the N-Cor repressor complex, at least composed of NCOR1, NCOR2, HDAC3, TBL1X, TBL1R, CORO2A and GPS2. Interacts with CBFA2T3 and ATXN1L. Interacts with RARB; the interaction is weak and does not repress RARB transactivational activity. Interacts (via 1D-myo-inositol 1,4,5,6-tetrakisphosphate) with HDAC3; promoting the histone deacetylase activity of HDAC3. Interacts with HDAC7 and C1D. Interacts with NR4A2; this interaction increases in the absence of PITX3. Interacts with BCL6 (via the BTB domain), required for BCL6 transcriptional repressor activity on a subset of target genes. Forms ternary complexes with BCOR and BCL6 on target gene promoters but, on enhancer elements, interacts with BCL6 and HDAC3 to repress proximal gene expression. May interact with DEAF1. Interacts with RXRA. Interacts with MECP2. Interacts with ZBTB7A. Interacts with AR. Interacts with TBL1Y. Interacts with SANBR (via the BTB domain). As to expression, ubiquitous. High levels of expression are detected in lung, spleen and brain.

It is found in the nucleus. In terms of biological role, transcriptional corepressor that mediates the transcriptional repression activity of some nuclear receptors by promoting chromatin condensation, thus preventing access of the basal transcription. Acts by recruiting chromatin modifiers, such as histone deacetylases HDAC1, HDAC2 and HDAC3. Required to activate the histone deacetylase activity of HDAC3. Involved in the regulation BCL6-dependent of the germinal center (GC) reactions, mainly through the control of the GC B-cells proliferation and survival. Recruited by ZBTB7A to the androgen response elements/ARE on target genes, negatively regulates androgen receptor signaling and androgen-induced cell proliferation. Isoform 1 and isoform 4 have different affinities for different nuclear receptors. This is Nuclear receptor corepressor 2 from Homo sapiens (Human).